A 138-amino-acid polypeptide reads, in one-letter code: Transcription antitermination protein NusB (138 aa).

The protein belongs to the NusB family.

Functionally, involved in transcription antitermination. Required for transcription of ribosomal RNA (rRNA) genes. Binds specifically to the boxA antiterminator sequence of the ribosomal RNA (rrn) operons. The sequence is that of Transcription antitermination protein NusB from Helicobacter pylori (strain P12).